We begin with the raw amino-acid sequence, 494 residues long: Ubiquitin carboxyl-terminal hydrolase 14 (494 aa).

Residues 4-80 (YSVTVKWGKE…MMGSADALPE (77 aa)) enclose the Ubiquitin-like domain. T52 carries the phosphothreonine modification. The USP domain occupies 105–483 (CGLTNLGNTC…IAYVLLYGPR (379 aa)). Catalysis depends on C114, which acts as the Nucleophile. A phosphoserine mark is found at S143 and S148. Residue T235 is modified to Phosphothreonine. Residues S237, S302, and S432 each carry the phosphoserine modification. H435 (proton acceptor) is an active-site residue. K449 carries the post-translational modification N6-acetyllysine.

The protein belongs to the peptidase C19 family. USP14/UBP6 subfamily. In terms of assembly, homodimer (Potential). Associates with the 26S proteasome. Interacts with FANCC, CXCR4 and ERN1. Interacts with TRIM14; this interaction recruits USP14 to cleave ubiquitin chains of CGAS and KDM4D.

It localises to the cytoplasm. The protein resides in the cell membrane. It carries out the reaction Thiol-dependent hydrolysis of ester, thioester, amide, peptide and isopeptide bonds formed by the C-terminal Gly of ubiquitin (a 76-residue protein attached to proteins as an intracellular targeting signal).. Its function is as follows. Proteasome-associated deubiquitinase which releases ubiquitin from the proteasome targeted ubiquitinated proteins. Ensures the regeneration of ubiquitin at the proteasome. Is a reversibly associated subunit of the proteasome and a large fraction of proteasome-free protein exists within the cell. Required for the degradation of the chemokine receptor CXCR4 which is critical for CXCL12-induced cell chemotaxis. Also serves as a physiological inhibitor of endoplasmic reticulum-associated degradation (ERAD) under the non-stressed condition by inhibiting the degradation of unfolded endoplasmic reticulum proteins via interaction with ERN1. Indispensable for synaptic development and function at neuromuscular junctions (NMJs). Plays a role in the innate immune defense against viruses by stabilizing the viral DNA sensor CGAS and thus inhibiting its autophagic degradation. Inhibits OPTN-mediated selective autophagic degradation of KDM4D and thereby negatively regulates H3K9me2 and H3K9me3. This chain is Ubiquitin carboxyl-terminal hydrolase 14 (USP14), found in Homo sapiens (Human).